The chain runs to 149 residues: Calmodulin-3 (149 aa).

Ala2 carries the N-acetylalanine modification. 4 consecutive EF-hand domains span residues Asp8–Asn43, Pro44–Asp79, Asp81–Lys116, and Leu117–Lys149. Ca(2+)-binding residues include Asp21, Asp23, Asp25, Cys27, Glu32, Asp57, Asp59, Asn61, Thr63, Glu68, Asp94, Asp96, Asn98, and Glu105. Position 116 is an N6,N6,N6-trimethyllysine (Lys116). 5 residues coordinate Ca(2+): Asp130, Asp132, Asp134, Gln136, and Glu141.

This sequence belongs to the calmodulin family.

Functionally, calmodulin mediates the control of a large number of enzymes, ion channels and other proteins by Ca(2+). Among the enzymes to be stimulated by the calmodulin-Ca(2+) complex are a number of protein kinases and phosphatases. The sequence is that of Calmodulin-3 (CAM3) from Oryza sativa subsp. indica (Rice).